The sequence spans 331 residues: Tetraacyldisaccharide 4'-kinase (331 aa).

60–67 (TIGGTGKT) provides a ligand contact to ATP.

This sequence belongs to the LpxK family.

It carries out the reaction a lipid A disaccharide + ATP = a lipid IVA + ADP + H(+). Its pathway is glycolipid biosynthesis; lipid IV(A) biosynthesis; lipid IV(A) from (3R)-3-hydroxytetradecanoyl-[acyl-carrier-protein] and UDP-N-acetyl-alpha-D-glucosamine: step 6/6. Transfers the gamma-phosphate of ATP to the 4'-position of a tetraacyldisaccharide 1-phosphate intermediate (termed DS-1-P) to form tetraacyldisaccharide 1,4'-bis-phosphate (lipid IVA). The sequence is that of Tetraacyldisaccharide 4'-kinase from Pseudomonas syringae pv. tomato (strain ATCC BAA-871 / DC3000).